The following is a 476-amino-acid chain: UDP-N-acetylmuramate--L-alanine ligase (476 aa).

112 to 118 (GTHGKTT) is an ATP binding site.

Belongs to the MurCDEF family.

Its subcellular location is the cytoplasm. It carries out the reaction UDP-N-acetyl-alpha-D-muramate + L-alanine + ATP = UDP-N-acetyl-alpha-D-muramoyl-L-alanine + ADP + phosphate + H(+). It functions in the pathway cell wall biogenesis; peptidoglycan biosynthesis. In terms of biological role, cell wall formation. This Magnetococcus marinus (strain ATCC BAA-1437 / JCM 17883 / MC-1) protein is UDP-N-acetylmuramate--L-alanine ligase.